The primary structure comprises 199 residues: Probable nicotinate-nucleotide adenylyltransferase (199 aa).

Belongs to the NadD family.

It carries out the reaction nicotinate beta-D-ribonucleotide + ATP + H(+) = deamido-NAD(+) + diphosphate. It participates in cofactor biosynthesis; NAD(+) biosynthesis; deamido-NAD(+) from nicotinate D-ribonucleotide: step 1/1. Functionally, catalyzes the reversible adenylation of nicotinate mononucleotide (NaMN) to nicotinic acid adenine dinucleotide (NaAD). In Rhizobium johnstonii (strain DSM 114642 / LMG 32736 / 3841) (Rhizobium leguminosarum bv. viciae), this protein is Probable nicotinate-nucleotide adenylyltransferase.